We begin with the raw amino-acid sequence, 382 residues long: Succinate--CoA ligase [ADP-forming] subunit beta (382 aa).

Positions 9–240 (KELFSKYGVK…PRDVTEFEAY (232 aa)) constitute an ATP-grasp domain. Residues Lys-45, 52–54 (GRG), Val-94, and Glu-99 each bind ATP. Residues Asn-193 and Asp-207 each contribute to the Mg(2+) site. Residues Asn-260 and 317–319 (GIT) each bind substrate.

The protein belongs to the succinate/malate CoA ligase beta subunit family. As to quaternary structure, heterotetramer of two alpha and two beta subunits. Mg(2+) serves as cofactor.

The enzyme catalyses succinate + ATP + CoA = succinyl-CoA + ADP + phosphate. It catalyses the reaction GTP + succinate + CoA = succinyl-CoA + GDP + phosphate. It participates in carbohydrate metabolism; tricarboxylic acid cycle; succinate from succinyl-CoA (ligase route): step 1/1. Succinyl-CoA synthetase functions in the citric acid cycle (TCA), coupling the hydrolysis of succinyl-CoA to the synthesis of either ATP or GTP and thus represents the only step of substrate-level phosphorylation in the TCA. The beta subunit provides nucleotide specificity of the enzyme and binds the substrate succinate, while the binding sites for coenzyme A and phosphate are found in the alpha subunit. This Pyrobaculum aerophilum (strain ATCC 51768 / DSM 7523 / JCM 9630 / CIP 104966 / NBRC 100827 / IM2) protein is Succinate--CoA ligase [ADP-forming] subunit beta.